The primary structure comprises 539 residues: Chaperonin GroEL 1 (539 aa).

ATP contacts are provided by residues 29 to 32 (TLGP), 86 to 90 (DGTTT), G413, 478 to 480 (NAA), and D494.

The protein belongs to the chaperonin (HSP60) family. In terms of assembly, forms a cylinder of 14 subunits composed of two heptameric rings stacked back-to-back. Interacts with the co-chaperonin GroES.

The protein localises to the cytoplasm. It carries out the reaction ATP + H2O + a folded polypeptide = ADP + phosphate + an unfolded polypeptide.. In terms of biological role, together with its co-chaperonin GroES, plays an essential role in assisting protein folding. The GroEL-GroES system forms a nano-cage that allows encapsulation of the non-native substrate proteins and provides a physical environment optimized to promote and accelerate protein folding. This chain is Chaperonin GroEL 1, found in Corynebacterium diphtheriae (strain ATCC 700971 / NCTC 13129 / Biotype gravis).